A 274-amino-acid polypeptide reads, in one-letter code: Putative HTH-type transcriptional regulator RmpR (274 aa).

The 71-residue stretch at 18-88 (IERADAIVER…RSGGTFVVNQ (71 aa)) folds into the HTH gntR-type domain. Residues 46 to 65 (EAALSEMFGVGGATLREALS) constitute a DNA-binding region (H-T-H motif). Positions 250 to 265 (SRPSSPATAPDGSSSA) are enriched in polar residues. Residues 250–274 (SRPSSPATAPDGSSSAEAAMIQEGQ) are disordered.

Its function is as follows. May regulate the transcription of the rmpAB operon. The polypeptide is Putative HTH-type transcriptional regulator RmpR (rmpR) (Mycobacterium gastri).